The sequence spans 929 residues: Chaperone protein ClpC1, chloroplastic (929 aa).

The N-terminal 38 residues, M1–M38, are a transit peptide targeting the chloroplast. The 143-residue stretch at F95–E237 folds into the Clp R domain. Repeat stretches follow at residues F98 to G163 and F173 to E237. The segment at L257–P504 is i. G302–T309 serves as a coordination point for ATP. In terms of domain architecture, UVR spans E511 to E546. Residues A552–V571 form a disordered region. The segment covering K553–S562 has biased composition (basic and acidic residues). An II region spans residues V571–S762. G645–S652 serves as a coordination point for ATP. Residues L908–L919 show a composition bias toward polar residues. The interval L908–A929 is disordered. Acidic residues predominate over residues E920–A929.

It belongs to the ClpA/ClpB family. ClpC subfamily. As to quaternary structure, homodimer. May form hexamer and interact with Clp core. Interacts (via N-terminus) with CLPS1. Interacts with CLPF. As to expression, highly expressed in rosette leaves. Expressed in roots, stems and inflorescences. Expressed in photosynthetic green tissues with high levels in young, developing leaf tissues.

It is found in the plastid. It localises to the chloroplast stroma. Its subcellular location is the chloroplast membrane. Molecular chaperone that hydrolyzes ATP and is associated with the chloroplast protein import apparatus. May function as the motor for chloroplast protein translocation, as translocation requires ATP hydrolysis in the stroma. May interact with a ClpP-like protease involved in degradation of denatured proteins in the chloroplast. Involved in the regulation of chlorophyll b biosynthesis through the destabilization of chlorophyllide a oxygenase (CAO) protein in response to the accumulation of chlorophyll b. Involved in leaf iron homeostasis. The sequence is that of Chaperone protein ClpC1, chloroplastic from Arabidopsis thaliana (Mouse-ear cress).